The primary structure comprises 267 residues: 5'-nucleotidase SurE (267 aa).

Positions 9, 10, 40, and 97 each coordinate a divalent metal cation.

Belongs to the SurE nucleotidase family. The cofactor is a divalent metal cation.

Its subcellular location is the cytoplasm. It carries out the reaction a ribonucleoside 5'-phosphate + H2O = a ribonucleoside + phosphate. Nucleotidase that shows phosphatase activity on nucleoside 5'-monophosphates. The polypeptide is 5'-nucleotidase SurE (Helicobacter pylori (strain HPAG1)).